The following is a 372-amino-acid chain: MRSKVTGAQRWVVKIGSALLTADGKGLDRNAMGVWVEQMVALHEAGVELVLVSSGAVAAGMSRLGWTARPSAMHELQAAAAIGQMGLVQAWESSFAEHGRHTAQILLTHDDLSDRKRYLNARSTLRTLVELGVVPVINENDTVVTDEIRFGDNDTLAALVANLVEADLLVILTDRDGMFDADPRNNPEAQLIYEARADDPALDAVAGGTGGALGRGGMQTKLRAARLAARSGAHTVIVGGRIERVLARLKGGERLGTLLSPERGMLAARKQWLAGHLQTRGTLVLDDGAVAALARDQKSLLPVGVKLVQGSFRRGEMVVCVAQDGREIARGLSNYSAIEAQKIIGHSSESIVRELGYMAEPELIHRDNLILV.

ATP is bound at residue Lys14. Substrate-binding residues include Ser54, Asp141, and Asn153. Residue 173-174 (TD) coordinates ATP. The PUA domain maps to 280–358 (RGTLVLDDGA…ESIVRELGYM (79 aa)).

It belongs to the glutamate 5-kinase family.

It is found in the cytoplasm. The catalysed reaction is L-glutamate + ATP = L-glutamyl 5-phosphate + ADP. The protein operates within amino-acid biosynthesis; L-proline biosynthesis; L-glutamate 5-semialdehyde from L-glutamate: step 1/2. Catalyzes the transfer of a phosphate group to glutamate to form L-glutamate 5-phosphate. The sequence is that of Glutamate 5-kinase from Pseudomonas syringae pv. syringae (strain B728a).